The sequence spans 209 residues: MQLSDRPLTAPGTAPRQATVSRRTGETDVQVFLNLDGTGRCQADTGIPFLDHMFDQIASHGLIDLEITAKGDLHIDDHHTNEDVGITFGLALAEALGDRKGIVRFGHFVAPLDEALVQVALDFSGRPHLTYGLTLPTERVGTYETQLVREFFVAIANNAKLTLHLRQLDGINSHHIIEATFKAFARSLRMATEVDPRRAGQIPSSKGVL.

The tract at residues 1–23 (MQLSDRPLTAPGTAPRQATVSRR) is disordered.

The protein belongs to the imidazoleglycerol-phosphate dehydratase family.

It localises to the cytoplasm. It carries out the reaction D-erythro-1-(imidazol-4-yl)glycerol 3-phosphate = 3-(imidazol-4-yl)-2-oxopropyl phosphate + H2O. Its pathway is amino-acid biosynthesis; L-histidine biosynthesis; L-histidine from 5-phospho-alpha-D-ribose 1-diphosphate: step 6/9. In Synechococcus elongatus (strain ATCC 33912 / PCC 7942 / FACHB-805) (Anacystis nidulans R2), this protein is Imidazoleglycerol-phosphate dehydratase.